We begin with the raw amino-acid sequence, 262 residues long: Acyl-[acyl-carrier-protein]--UDP-N-acetylglucosamine O-acyltransferase (262 aa).

This sequence belongs to the transferase hexapeptide repeat family. LpxA subfamily. As to quaternary structure, homotrimer.

The protein resides in the cytoplasm. It carries out the reaction a (3R)-hydroxyacyl-[ACP] + UDP-N-acetyl-alpha-D-glucosamine = a UDP-3-O-[(3R)-3-hydroxyacyl]-N-acetyl-alpha-D-glucosamine + holo-[ACP]. Its pathway is glycolipid biosynthesis; lipid IV(A) biosynthesis; lipid IV(A) from (3R)-3-hydroxytetradecanoyl-[acyl-carrier-protein] and UDP-N-acetyl-alpha-D-glucosamine: step 1/6. Its function is as follows. Involved in the biosynthesis of lipid A, a phosphorylated glycolipid that anchors the lipopolysaccharide to the outer membrane of the cell. This chain is Acyl-[acyl-carrier-protein]--UDP-N-acetylglucosamine O-acyltransferase, found in Burkholderia ambifaria (strain ATCC BAA-244 / DSM 16087 / CCUG 44356 / LMG 19182 / AMMD) (Burkholderia cepacia (strain AMMD)).